The primary structure comprises 490 residues: AP-5 complex subunit mu-1 (490 aa).

Residues 206-476 enclose the MHD domain; that stretch reads KPQVSISITE…LISSDYYIWN (271 aa).

This sequence belongs to the adaptor complexes medium subunit family. As to quaternary structure, probably part of the adaptor protein complex 5 (AP-5) a tetramer composed of AP5B1, AP5M1, AP5S1 and AP5Z1. Expressed in various tumor cell lines including Jurkat, Hep-G2 and HeLa.

The protein resides in the cytoplasm. The protein localises to the cytosol. Its subcellular location is the late endosome membrane. It localises to the lysosome membrane. In terms of biological role, as part of AP-5, a probable fifth adaptor protein complex it may be involved in endosomal transport. According to PubMed:18395520, it may play a role in cell death. The sequence is that of AP-5 complex subunit mu-1 (AP5M1) from Homo sapiens (Human).